The sequence spans 469 residues: Glutamine synthetase (469 aa).

Positions 14-99 constitute a GS beta-grasp domain; it reads NDVKFVDLRF…VCDILDPVSG (86 aa). The GS catalytic domain occupies 106-469; it reads RRGTAKKAEA…PVEYDMYYSA (364 aa). Positions 131 and 133 each coordinate Mg(2+). Residue glutamate 209 coordinates ATP. Mg(2+) is bound by residues glutamate 214 and aspartate 221. L-glutamate is bound by residues 265 to 266 and glycine 266; that span reads NG. Histidine 270 is a binding site for Mg(2+). ATP contacts are provided by residues 272–274 and serine 274; that span reads HQS. Residues arginine 322, glutamate 328, and arginine 340 each coordinate L-glutamate. ATP contacts are provided by arginine 340, arginine 345, and lysine 353. Position 358 (glutamate 358) interacts with Mg(2+). Arginine 360 contacts L-glutamate. Tyrosine 398 bears the O-AMP-tyrosine mark.

It belongs to the glutamine synthetase family. In terms of assembly, oligomer of 12 subunits arranged in the form of two hexameric ring. The cofactor is Mg(2+).

It is found in the cytoplasm. The catalysed reaction is L-glutamate + NH4(+) + ATP = L-glutamine + ADP + phosphate + H(+). Its activity is regulated as follows. The activity of this enzyme could be controlled by adenylation under conditions of abundant glutamine. Its function is as follows. Catalyzes the ATP-dependent biosynthesis of glutamine from glutamate and ammonia. The protein is Glutamine synthetase of Rhizobium leguminosarum bv. viciae.